The sequence spans 74 residues: Putative ribosome-binding protein YbzG (74 aa).

This is Putative ribosome-binding protein YbzG (ybzG) from Bacillus subtilis (strain 168).